We begin with the raw amino-acid sequence, 621 residues long: Microbial serine proteinase (621 aa).

A signal peptide spans M1–A24. The 373-residue stretch at P68–Q440 folds into the Peptidase S8 domain. D98 functions as the Charge relay system in the catalytic mechanism. The interval P114–R133 is disordered. Active-site charge relay system residues include H137 and S354. Positions A454–A619 constitute a P/Homo B domain. A disordered region spans residues L457–V485. Residues R465 to V485 are compositionally biased toward polar residues.

Belongs to the peptidase S8 family.

Its function is as follows. Agent of furonculosis. The polypeptide is Microbial serine proteinase (aspA) (Aeromonas salmonicida).